A 525-amino-acid polypeptide reads, in one-letter code: Protein-serine O-palmitoleoyltransferase porcupine (525 aa).

9 helical membrane-spanning segments follow: residues 83–103 (VMQYVAPMLLLCLLCRLLCLL), 125–145 (LIILQITVGYRLLLLLLLAAV), 159–179 (GAQVLAVLTVGSQFLYELLIW), 220–240 (FAYLGYIYSPATCALGPWVSF), 260–280 (LLPNVVICVLAVTVSNCVAPA), 301–318 (VRSSHYFVGMMAQALLVA), 395–415 (SLLHGMDLRIYLVLISLAFLA), 467–487 (NLAFTALAIFHLAYLGVVLLG), and 505–525 (QAGYLSHYIGLGTFVLYLFIS). His-398 is an active-site residue.

It belongs to the membrane-bound acyltransferase family. Porcupine subfamily. In terms of assembly, interacts with wg and Wnt5.

The protein resides in the endoplasmic reticulum membrane. The enzyme catalyses [Wnt protein]-L-serine + (9Z)-hexadecenoyl-CoA = [Wnt protein]-O-(9Z)-hexadecenoyl-L-serine + CoA. Functionally, protein-serine O-palmitoleoyltransferase that acts as a key regulator of the Wnt signaling pathway by mediating the attachment of palmitoleate, a 16-carbon monounsaturated fatty acid (C16:1(9Z)), to Wnt proteins. Serine palmitoleoylation of Wnt proteins is required for efficient binding to frizzled receptors. Also facilitates the glycosylation of Wnt family members, including wg and Wnt5. The cotranslational disulfide bond formation of wg competes with the N-glycosylation. Porc stimulates the post-translational N-glycosylation by anchoring wg at the ER membrane, probably through acylation. This is Protein-serine O-palmitoleoyltransferase porcupine from Drosophila melanogaster (Fruit fly).